We begin with the raw amino-acid sequence, 86 residues long: Large ribosomal subunit protein bL27 (86 aa).

The disordered stretch occupies residues 1–22 (MATKKAGGSSRNGRDSAGRRLG).

Belongs to the bacterial ribosomal protein bL27 family.

The chain is Large ribosomal subunit protein bL27 from Rickettsia rickettsii (strain Iowa).